The following is a 157-amino-acid chain: MIRVGQGFDVHQFAEGRLLIIGGVEIPYEKGLLGHSDADVLLHTIADAALGAIGEGDIGKHFPDTDPHFKDADSAKLLSAVWELVKEKGYTLGNVDCTIIAQKPKMAPHIPAMRARIAELLEAEEAQVNVKATTTETLGFTGRGEGIASQAVILLVK.

Residues aspartate 9 and histidine 11 each contribute to the a divalent metal cation site. 4-CDP-2-C-methyl-D-erythritol 2-phosphate is bound by residues 9–11 (DVH) and 35–36 (HS). Histidine 43 is an a divalent metal cation binding site. 4-CDP-2-C-methyl-D-erythritol 2-phosphate-binding positions include 57–59 (DIG), 62–66 (FPDTD), 101–107 (AQKPKMA), 133–136 (TTTE), phenylalanine 140, and arginine 143.

The protein belongs to the IspF family. Homotrimer. The cofactor is a divalent metal cation.

It carries out the reaction 4-CDP-2-C-methyl-D-erythritol 2-phosphate = 2-C-methyl-D-erythritol 2,4-cyclic diphosphate + CMP. Its pathway is isoprenoid biosynthesis; isopentenyl diphosphate biosynthesis via DXP pathway; isopentenyl diphosphate from 1-deoxy-D-xylulose 5-phosphate: step 4/6. Involved in the biosynthesis of isopentenyl diphosphate (IPP) and dimethylallyl diphosphate (DMAPP), two major building blocks of isoprenoid compounds. Catalyzes the conversion of 4-diphosphocytidyl-2-C-methyl-D-erythritol 2-phosphate (CDP-ME2P) to 2-C-methyl-D-erythritol 2,4-cyclodiphosphate (ME-CPP) with a corresponding release of cytidine 5-monophosphate (CMP). In Halalkalibacterium halodurans (strain ATCC BAA-125 / DSM 18197 / FERM 7344 / JCM 9153 / C-125) (Bacillus halodurans), this protein is 2-C-methyl-D-erythritol 2,4-cyclodiphosphate synthase.